Here is a 180-residue protein sequence, read N- to C-terminus: Large ribosomal subunit protein uL6 (180 aa).

The protein belongs to the universal ribosomal protein uL6 family. In terms of assembly, part of the 50S ribosomal subunit.

Functionally, this protein binds to the 23S rRNA, and is important in its secondary structure. It is located near the subunit interface in the base of the L7/L12 stalk, and near the tRNA binding site of the peptidyltransferase center. The polypeptide is Large ribosomal subunit protein uL6 (Clostridium botulinum (strain ATCC 19397 / Type A)).